A 314-amino-acid polypeptide reads, in one-letter code: Ferrochelatase (314 aa).

Residues His184 and Glu259 each contribute to the Fe cation site.

The protein belongs to the ferrochelatase family.

The protein resides in the cytoplasm. It carries out the reaction heme b + 2 H(+) = protoporphyrin IX + Fe(2+). Its pathway is porphyrin-containing compound metabolism; protoheme biosynthesis; protoheme from protoporphyrin-IX: step 1/1. Its function is as follows. Catalyzes the ferrous insertion into protoporphyrin IX. The protein is Ferrochelatase of Chlamydia trachomatis serovar A (strain ATCC VR-571B / DSM 19440 / HAR-13).